A 935-amino-acid chain; its full sequence is Transcriptional regulatory protein LevR (935 aa).

The Sigma-54 factor interaction domain maps to 117–348; that stretch reads AKGSLKKAIS…LKSNVQLVCA (232 aa). ATP contacts are provided by residues 145–152 and 215–224; these read GPTGSGKS and ANGGILFMDE. A PRD 1 domain is found at 468–573; that stretch reads FVEDDVIQMT…HSIKSLKENK (106 aa). His-503 is subject to Phosphohistidine. The PTS EIIA type-4 domain maps to 574–711; it reads RVGIIVAAHG…PAASGKKKAL (138 aa). The residue at position 582 (His-582) is a Phosphohistidine; by HPr. The 105-residue stretch at 831 to 935 folds into the PRD 2 domain; the sequence is LNPHHVIDML…FAEEVHGQLF (105 aa). Residue His-866 is modified to Phosphohistidine.

Belongs to the transcriptional antiterminator BglG family. Possibly phosphorylated and inactivated by the PTS system.

Involved in positive regulation of the levanase operon which comprises the levDEFG genes for a fructose PTS system, and sacA for levanase. This chain is Transcriptional regulatory protein LevR (levR), found in Bacillus subtilis (strain 168).